The following is a 173-amino-acid chain: Thiol-disulfide oxidoreductase ResA (173 aa).

The helical; Signal-anchor for type II membrane protein transmembrane segment at 10–29 threads the bilayer; that stretch reads VIILLILCGAVGFTLYQGFF. One can recognise a Thioredoxin domain in the interval 35–173; it reads MQIGKEAPNF…LEGYLQKITP (139 aa). Residues Cys73 and Cys76 are joined by a disulfide bond.

It belongs to the thioredoxin family. ResA subfamily.

It is found in the cell membrane. Its pathway is protein modification; cytochrome c assembly. In terms of biological role, thiol-disulfide oxidoreductase which is required in disulfide reduction during c-type cytochrome synthesis. May accept reducing equivalents from CcdA, leading to breakage of disulfide bonds in apocytochrome c; following this reduction heme can be covalently attached. In Bacillus cereus (strain ZK / E33L), this protein is Thiol-disulfide oxidoreductase ResA.